The following is a 338-amino-acid chain: S-adenosylmethionine:tRNA ribosyltransferase-isomerase (338 aa).

This sequence belongs to the QueA family. In terms of assembly, monomer.

It localises to the cytoplasm. The catalysed reaction is 7-aminomethyl-7-carbaguanosine(34) in tRNA + S-adenosyl-L-methionine = epoxyqueuosine(34) in tRNA + adenine + L-methionine + 2 H(+). It participates in tRNA modification; tRNA-queuosine biosynthesis. Transfers and isomerizes the ribose moiety from AdoMet to the 7-aminomethyl group of 7-deazaguanine (preQ1-tRNA) to give epoxyqueuosine (oQ-tRNA). This is S-adenosylmethionine:tRNA ribosyltransferase-isomerase from Francisella tularensis subsp. tularensis (strain WY96-3418).